We begin with the raw amino-acid sequence, 108 residues long: Small ribosomal subunit protein uS17 (108 aa).

This sequence belongs to the universal ribosomal protein uS17 family. In terms of assembly, part of the 30S ribosomal subunit.

Its function is as follows. One of the primary rRNA binding proteins, it binds specifically to the 5'-end of 16S ribosomal RNA. The polypeptide is Small ribosomal subunit protein uS17 (Methanocorpusculum labreanum (strain ATCC 43576 / DSM 4855 / Z)).